Consider the following 1822-residue polypeptide: Integrin beta-4 (1822 aa).

A signal peptide spans 1-27 (MAGPRPSPWARLLLAALISVSLSGTLA). Residues 28–710 (NRCKKAPVKS…HKKKDCPPGS (683 aa)) are Extracellular-facing. In terms of domain architecture, PSI spans 29–73 (RCKKAPVKSCTECVRVDKDCAYCTDEMFRDRRCNTQAELLAAGCQ). Cystine bridges form between Cys-30–Cys-48, Cys-38–Cys-455, Cys-41–Cys-61, Cys-51–Cys-72, Cys-245–Cys-288, Cys-457–Cys-476, Cys-468–Cys-479, and Cys-481–Cys-490. The VWFA domain maps to 131 to 329 (DLYILMDFSN…IPIFAVTNYS (199 aa)). Mg(2+) is bound by residues Ser-139 and Ser-141. Ca(2+)-binding residues include Ser-141, Asp-144, Asp-145, and Asp-176. The interval 194–199 (WPNSDP) is involved in NRG1- and IGF1-binding. Residues Asn-228, Asp-230, Pro-232, and Glu-233 each coordinate Ca(2+). Mg(2+) is bound at residue Glu-233. Asn-327 is a glycosylation site (N-linked (GlcNAc...) asparagine). Glu-350 provides a ligand contact to Ca(2+). 4 consecutive I-EGF domains span residues 457-491 (CELQ…QTCN), 492-537 (CSTG…QFCE), 538-574 (YDNF…PSCD), and 575-615 (CPLS…TICE). A glycan (N-linked (GlcNAc...) asparagine) is linked at Asn-491. Intrachain disulfides connect Cys-492-Cys-520, Cys-503-Cys-518, Cys-512-Cys-523, Cys-525-Cys-536, Cys-543-Cys-557, Cys-551-Cys-562, Cys-564-Cys-573, Cys-575-Cys-598, Cys-582-Cys-596, Cys-590-Cys-601, and Cys-603-Cys-614. An N-linked (GlcNAc...) asparagine glycan is attached at Asn-579. N-linked (GlcNAc...) asparagine glycosylation is present at Asn-617. 4 cysteine pairs are disulfide-bonded: Cys-626/Cys-671, Cys-632/Cys-651, Cys-635/Cys-648, and Cys-680/Cys-706. Asn-695 carries an N-linked (GlcNAc...) asparagine glycan. Residues 711–733 (FWWLIPLLLLLLPLLALLLLLCW) form a helical membrane-spanning segment. Residues 732 to 749 (CWKYCACCKACLALLPCC) form a palmitoylated on several cysteines region. Topologically, residues 734 to 1822 (KYCACCKACL…THMDQQFFQT (1089 aa)) are cytoplasmic. Residues Ser-771, Ser-1069, and Ser-1119 each carry the phosphoserine modification. In terms of domain architecture, Calx-beta spans 979–1084 (VNITIIKEQA…QVRRFHVQLS (106 aa)). The segment at 1113-1140 (TSQMLSSQPPPHGDLGAPQNPNAKAAGS) is disordered. Fibronectin type-III domains lie at 1129-1218 (APQN…THQE) and 1222-1321 (EPGR…TQPK). The interval 1400 to 1444 (LSASSGRSSDAEAPHGPPDDGGAGGKGGSLPRSATPGPPGEHLVN) is disordered. Residues 1418 to 1427 (DDGGAGGKGG) show a composition bias toward gly residues. Phosphoserine is present on residues Ser-1454, Ser-1457, and Ser-1474. Thr-1487 bears the Phosphothreonine mark. Phosphoserine is present on Ser-1494. A disordered region spans residues 1495–1525 (LTRSEHSHSTTLPRDYSTLTSVSSHDSRLTA). Polar residues predominate over residues 1503 to 1518 (STTLPRDYSTLTSVSS). Thr-1530 carries the post-translational modification Phosphothreonine. Fibronectin type-III domains follow at residues 1530–1625 (TPTR…VHPQ) and 1643–1739 (APGP…SQDG). Ser-1791 carries the phosphoserine modification.

The protein belongs to the integrin beta chain family. As to quaternary structure, heterodimer of an alpha and a beta subunit. Beta-4 associates with alpha-6. Interacts (via cytoplasmic region) with COL17A1 (via cytoplasmic region). Interacts (via cytoplasmic region) with DST isoform 3 (via N-terminus). Isoform beta-4a interacts (via cytoplasmic domain) with DST (via N-terminus). Interacts with RAC1. ITGA6:ITGB4 is found in a ternary complex with NRG1 and ERBB3. ITGA6:ITGB4 is found in a ternary complex with IGF1 and IGF1R. ITGA6:ITGB4 interacts with IGF2. Interacts with TMEM268; this interaction prevents ITGB4 degradation. Post-translationally, palmitoylated by DHHC3 at several cysteines of the membrane-proximal region, enhancing stability and cell surface expression. Palmitoylation also promotes secondary association with tertaspanins. Integrin alpha-6/beta-4 is predominantly expressed by epithelia. Isoform beta-4D is also expressed in colon and placenta. Isoform beta-4E is also expressed in epidermis, lung, duodenum, heart, spleen and stomach.

It is found in the cell membrane. It localises to the cell junction. Its subcellular location is the hemidesmosome. Its function is as follows. Integrin alpha-6/beta-4 is a receptor for laminin. Plays a critical structural role in the hemidesmosome of epithelial cells. Is required for the regulation of keratinocyte polarity and motility. ITGA6:ITGB4 binds to NRG1 (via EGF domain) and this binding is essential for NRG1-ERBB signaling. ITGA6:ITGB4 binds to IGF1 and this binding is essential for IGF1 signaling. ITGA6:ITGB4 binds to IGF2 and this binding is essential for IGF2 signaling. The protein is Integrin beta-4 (ITGB4) of Homo sapiens (Human).